Reading from the N-terminus, the 458-residue chain is MKIIILGAGQVGTTLAENLVSEDNDITLVDNESPQLQTLQEKHDLRVVQGSPSSPKVLRDAGAADADLMVAVTASDEINMVACQMGYTLFNTPTRIARIRNSEYLREKDKLFNNENIPIDHLISPENLVTDEITRLIAYPGALQVAHFANNRISIVVVKAYYGGALVGYALSAFREHMPHIDCRIMSILRNGKPIRPQGSTIVEAGDEITFICATEHIKAIMGELQRLEKPYKRVMIVGGGNVAFGVAKRLENSCTVKLIERDSNRAQALAEKLPKTLVFNGDASDQNLLFEEHIESVDVFLSLSSDDEANIMSALLAKRLGAKKAMVLIQRIAYINLIQGGTIDIAVSPQQVTISALLGHVRKGDVKNVATLRHGIAEAIEIVAHGNVNTSNIVGRKIGELRLPMGIIIGALLRGNDVIIARRQVIIEEGDHIVIYLSDKKNVPEIEKLFQPSAFFI.

The region spanning 1-123 (MKIIILGAGQ…NENIPIDHLI (123 aa)) is the RCK N-terminal 1 domain. Residues 7–11 (GAGQV), Asp30, 73–74 (TA), and Arg98 each bind NAD(+). Positions 143–227 (LQVAHFANNR…IKAIMGELQR (85 aa)) constitute an RCK C-terminal 1 domain. An RCK N-terminal 2 domain is found at 232 to 348 (YKRVMIVGGG…IQGGTIDIAV (117 aa)). Residue 234–262 (RVMIVGGGNVAFGVAKRLENSCTVKLIER) coordinates NAD(+). The 86-residue stretch at 368-453 (KNVATLRHGI…VPEIEKLFQP (86 aa)) folds into the RCK C-terminal 2 domain.

Functionally, part of a potassium transport system. The polypeptide is Trk system potassium uptake protein TrkA (trkA) (Haemophilus influenzae (strain ATCC 51907 / DSM 11121 / KW20 / Rd)).